A 265-amino-acid chain; its full sequence is Adenosylcobinamide-GDP ribazoletransferase (265 aa).

A run of 4 helical transmembrane segments spans residues 51–71 (LVGVILGVLCALVFYFTQLIF), 72–92 (PDSVAIVLTMAFSLLLTGAFH), 121–140 (IGTYGAATLVMALLAKFVLW), and 203–223 (VASLFLGVIQTSFIVIVLFAF).

This sequence belongs to the CobS family. The cofactor is Mg(2+).

It is found in the cell inner membrane. It carries out the reaction alpha-ribazole + adenosylcob(III)inamide-GDP = adenosylcob(III)alamin + GMP + H(+). It catalyses the reaction alpha-ribazole 5'-phosphate + adenosylcob(III)inamide-GDP = adenosylcob(III)alamin 5'-phosphate + GMP + H(+). It functions in the pathway cofactor biosynthesis; adenosylcobalamin biosynthesis; adenosylcobalamin from cob(II)yrinate a,c-diamide: step 7/7. Joins adenosylcobinamide-GDP and alpha-ribazole to generate adenosylcobalamin (Ado-cobalamin). Also synthesizes adenosylcobalamin 5'-phosphate from adenosylcobinamide-GDP and alpha-ribazole 5'-phosphate. In Vibrio parahaemolyticus serotype O3:K6 (strain RIMD 2210633), this protein is Adenosylcobinamide-GDP ribazoletransferase.